A 318-amino-acid polypeptide reads, in one-letter code: tRNA pseudouridine synthase B (318 aa).

Residue D47 is the Nucleophile of the active site.

This sequence belongs to the pseudouridine synthase TruB family. Type 1 subfamily.

It catalyses the reaction uridine(55) in tRNA = pseudouridine(55) in tRNA. Responsible for synthesis of pseudouridine from uracil-55 in the psi GC loop of transfer RNAs. In Shewanella putrefaciens (strain CN-32 / ATCC BAA-453), this protein is tRNA pseudouridine synthase B.